The following is a 515-amino-acid chain: Bifunctional purine biosynthesis protein PurH (515 aa).

Residues 1–145 (MTKRVLISVS…KNHASVTVVV (145 aa)) form the MGS-like domain.

This sequence belongs to the PurH family.

The catalysed reaction is (6R)-10-formyltetrahydrofolate + 5-amino-1-(5-phospho-beta-D-ribosyl)imidazole-4-carboxamide = 5-formamido-1-(5-phospho-D-ribosyl)imidazole-4-carboxamide + (6S)-5,6,7,8-tetrahydrofolate. It carries out the reaction IMP + H2O = 5-formamido-1-(5-phospho-D-ribosyl)imidazole-4-carboxamide. It functions in the pathway purine metabolism; IMP biosynthesis via de novo pathway; 5-formamido-1-(5-phospho-D-ribosyl)imidazole-4-carboxamide from 5-amino-1-(5-phospho-D-ribosyl)imidazole-4-carboxamide (10-formyl THF route): step 1/1. Its pathway is purine metabolism; IMP biosynthesis via de novo pathway; IMP from 5-formamido-1-(5-phospho-D-ribosyl)imidazole-4-carboxamide: step 1/1. The polypeptide is Bifunctional purine biosynthesis protein PurH (Streptococcus pneumoniae serotype 2 (strain D39 / NCTC 7466)).